Here is a 1138-residue protein sequence, read N- to C-terminus: 2'-5'-oligoadenylate synthase 3 (1138 aa).

At Met1 the chain carries N-acetylmethionine. An OAS domain 1 region spans residues 6-341 (TPAGALDKLV…GVLVQPWEGP (336 aa)). Interaction with dsRNA stretches follow at residues 12-56 (DKLV…VIRI) and 185-199 (EPRK…AKLK). The linker stretch occupies residues 342 to 462 (GLPRAGILDL…GSRMSPDLSQ (121 aa)). Basic and acidic residues predominate over residues 370 to 379 (LAVQSKERSQ). 2 disordered regions span residues 370-403 (LAVQ…NPSA) and 434-459 (TQST…MSPD). The span at 447–459 (SSISTAGSRMSPD) shows a compositional bias: polar residues. OAS domain regions lie at residues 463 to 793 (IPSK…PWDV) and 801 to 1135 (TLAE…WPVK). Position 855 (Ser855) interacts with ATP. Residues Asp867, Asp869, and Asp939 each contribute to the Mg(2+) site. ATP is bound by residues Arg998, Lys1001, and Gln1020.

The protein belongs to the 2-5A synthase family. Monomer. It depends on Mg(2+) as a cofactor. Intestine.

The protein localises to the cytoplasm. Its subcellular location is the nucleus. The enzyme catalyses 3 ATP = 5'-triphosphoadenylyl-(2'-&gt;5')-adenylyl-(2'-&gt;5')-adenosine + 2 diphosphate. Its activity is regulated as follows. Produced as a latent enzyme which is activated by dsRNA generated during the course of viral infection. Strongly activated by long dsRNAs at least 50 nucleotides in length. ssRNA does not activate the enzyme. Interferon-induced, dsRNA-activated antiviral enzyme which plays a critical role in cellular innate antiviral response. In addition, it may also play a role in other cellular processes such as apoptosis, cell growth, differentiation and gene regulation. Synthesizes preferentially dimers of 2'-5'-oligoadenylates (2-5A) from ATP which then bind to the inactive monomeric form of ribonuclease L (RNase L) leading to its dimerization and subsequent activation. Activation of RNase L leads to degradation of cellular as well as viral RNA, resulting in the inhibition of protein synthesis, thus terminating viral replication. Can mediate the antiviral effect via the classical RNase L-dependent pathway or an alternative antiviral pathway independent of RNase L. The protein is 2'-5'-oligoadenylate synthase 3 (Oas3) of Mus musculus (Mouse).